We begin with the raw amino-acid sequence, 268 residues long: MAGELRIMENKSREDINLSPVSKIEIYSFFDPFSSDCFKLSAILSKLRIEYNQYIRIRHILNPSLKVLTKCQAQSTSNFDNIALAYKAAELQGRVRAERFIHLMQNEIIPKRDIITESMICDCIQNAGIDLEVFKDDLQKSKLTESLKIDLHIAREMEIEQAPSLVFFSEDVHEEGLKVEGLYPYHIYTYIINELMGKPIEKNLPPKLETYIQQQQLVTMEELLTIYEWPEKLLNKELKKLAIQQKIEKLKYPDGDFWKSKMPKIKSK.

It belongs to the SpxH family. In terms of assembly, interacts with Spx.

It is found in the cytoplasm. Adapter protein required for efficient degradation of Spx by ClpXP under non-stress conditions. Interaction with Spx stabilizes Spx and exposes the C-terminus of Spx for recognition and proteolysis by ClpXP. The polypeptide is ClpXP adapter protein SpxH (Staphylococcus aureus (strain Mu3 / ATCC 700698)).